The chain runs to 146 residues: uncharacterized protein (146 aa).

Residues 7-24 (VIALFLVTGLTLYAIRLL) traverse the membrane as a helical segment.

It is found in the membrane. This is an uncharacterized protein from Haemophilus influenzae (strain ATCC 51907 / DSM 11121 / KW20 / Rd).